A 250-amino-acid polypeptide reads, in one-letter code: UDP-2,3-diacylglucosamine hydrolase (250 aa).

Mn(2+)-binding residues include D8, H10, D41, N79, and H114. 79-80 provides a ligand contact to substrate; the sequence is NR. Residues D122, S160, Q167, and H195 each coordinate substrate. Residues H195 and H197 each coordinate Mn(2+).

It belongs to the LpxH family. Requires Mn(2+) as cofactor.

It localises to the cell inner membrane. The catalysed reaction is UDP-2-N,3-O-bis[(3R)-3-hydroxytetradecanoyl]-alpha-D-glucosamine + H2O = 2-N,3-O-bis[(3R)-3-hydroxytetradecanoyl]-alpha-D-glucosaminyl 1-phosphate + UMP + 2 H(+). It functions in the pathway glycolipid biosynthesis; lipid IV(A) biosynthesis; lipid IV(A) from (3R)-3-hydroxytetradecanoyl-[acyl-carrier-protein] and UDP-N-acetyl-alpha-D-glucosamine: step 4/6. Hydrolyzes the pyrophosphate bond of UDP-2,3-diacylglucosamine to yield 2,3-diacylglucosamine 1-phosphate (lipid X) and UMP by catalyzing the attack of water at the alpha-P atom. Involved in the biosynthesis of lipid A, a phosphorylated glycolipid that anchors the lipopolysaccharide to the outer membrane of the cell. In Nitrosococcus oceani (strain ATCC 19707 / BCRC 17464 / JCM 30415 / NCIMB 11848 / C-107), this protein is UDP-2,3-diacylglucosamine hydrolase.